A 357-amino-acid chain; its full sequence is Cinnamyl alcohol dehydrogenase 5 (357 aa).

C47 contributes to the Zn(2+) binding site. Residue T49 participates in NADP(+) binding. Residues H69, E70, C100, C103, C106, C114, and C163 each coordinate Zn(2+). NADP(+) contacts are provided by residues T167, 188 to 193, 211 to 216, T251, G275, and 298 to 300; these read GLGGVG, SSSNKK, and SFI.

The protein belongs to the zinc-containing alcohol dehydrogenase family. Homodimer. The cofactor is Zn(2+). Expressed at the lateral root initiation sites, in the vascular tissues of the primary lateral root and the root caps. Expressed in the hypocotyl, cotyledon and leaf veins, apical meristem region, at the base of the trichomes, hydathodes and cauline leaves. In stems, expressed in the cells associated with the vascular cambium, interfascicular cambium and the developing xylem. Expressed in the vascular strand of petals and sepals, anthers, stamen filaments, stigma in flowers, and abscission, style and stigmatic regions of siliques.

The catalysed reaction is (E)-cinnamyl alcohol + NADP(+) = (E)-cinnamaldehyde + NADPH + H(+). The enzyme catalyses (E)-coniferol + NADP(+) = (E)-coniferaldehyde + NADPH + H(+). It carries out the reaction (E)-sinapyl alcohol + NADP(+) = (E)-sinapaldehyde + NADPH + H(+). It catalyses the reaction (E)-4-coumaroyl alcohol + NADP(+) = (E)-4-coumaraldehyde + NADPH + H(+). The catalysed reaction is (E)-caffeyl alcohol + NADP(+) = (E)-caffeyl aldehyde + NADPH + H(+). The protein operates within aromatic compound metabolism; phenylpropanoid biosynthesis. Its function is as follows. Involved in lignin biosynthesis in the floral stem. Catalyzes the final step specific for the production of lignin monomers. Catalyzes the NADPH-dependent reduction of coniferaldehyde, 5-hydroxyconiferaldehyde, sinapaldehyde, 4-coumaraldehyde and caffeyl aldehyde to their respective alcohols. In Arabidopsis thaliana (Mouse-ear cress), this protein is Cinnamyl alcohol dehydrogenase 5.